A 136-amino-acid polypeptide reads, in one-letter code: MLAPKKQRFRKAHKGRVVSKAKAGTTLAFGSFGLKSIDSWRVTARQIEAGRKAATRCMKRQGRLWIRIFPDVPVSKKPAEVRMGKGKGSPEFFAVRVAPGRIMFEIAGVEENIAIRALELASTKLPVRTRIVRRYE.

It belongs to the universal ribosomal protein uL16 family. Part of the 50S ribosomal subunit.

Binds 23S rRNA and is also seen to make contacts with the A and possibly P site tRNAs. This Rickettsia canadensis (strain McKiel) protein is Large ribosomal subunit protein uL16.